A 644-amino-acid chain; its full sequence is MADQKKPLQGGATLPLMAMAALGVVFGDIGTSPLYTLSACLSAMSLQPTAVNLQGILSLIFWTLVLVVSVKYAWVIMRASNQGEGGAMALTALASHATGHSNRLRWWILSIGLLGAALFYGDGVITPAISVLSAIEGMEVASPAWKPLVIPLALGVIIGLFMVQRRGTAAISHLFGPSMLVWFLLLFGSGLTWIVADPQVLIALNPWYALQFFGIHGIGGLVILGAVVLAVTGAEALYADMGHFGARPIRMAWYFLVLPALALNYLGQGALLELDPSAIQNPFFMLFPAWATIPMVVISGIATVIASQSVISGAYSATRQALLLGYLPRQAIIHTSASERGQIYLPLLNWLLMVAVIVVILWFRSSNALSFAYGTAVTGTMLMTTILVFFVARHSWKWSLWKAGLFCGFFVLLDGVFFGANLLKFVEGGWFPLAIGLAVFTTMSTWRWGRGILASKLYPDTLSVEDFLSSVTPGDPIRVPGTAVYLTMREKAIPHALLHNLKHNKVLHERVVILTIKFEEEPRVLPANRVVVLDYGQGVRRLTARYGFMEHPDIPEILKSAENSDNLWNPLDTTYFVSRQRVIPTAKASLSLWREHLFAIMLRISANATDFFRLPPNLVMELGDVVEFSHKVPDAPKKEKTTQQ.

The next 12 helical transmembrane spans lie at 10–30 (GGAT…GDIG), 56–76 (ILSL…AWVI), 106–126 (WWIL…GVIT), 143–163 (PAWK…LFMV), 175–195 (FGPS…TWIV), 212–232 (FFGI…LAVT), 252–272 (AWYF…GALL), 282–302 (PFFM…SGIA), 343–363 (IYLP…ILWF), 371–391 (FAYG…VFFV), 403–423 (AGLF…ANLL), and 425–445 (FVEG…TMST).

This sequence belongs to the HAK/KUP transporter (TC 2.A.72) family.

Its subcellular location is the cell inner membrane. The catalysed reaction is K(+)(in) + H(+)(in) = K(+)(out) + H(+)(out). Functionally, transport of potassium into the cell. Likely operates as a K(+):H(+) symporter. This chain is Probable potassium transport system protein Kup, found in Acidithiobacillus ferrooxidans (strain ATCC 23270 / DSM 14882 / CIP 104768 / NCIMB 8455) (Ferrobacillus ferrooxidans (strain ATCC 23270)).